Here is a 222-residue protein sequence, read N- to C-terminus: Adenylate kinase (222 aa).

10–15 (GAGKGT) serves as a coordination point for ATP. An NMP region spans residues 30-59 (STGDMLRAAVKAGTPLGIEAKKVMDAGGLV). AMP is bound by residues Thr31, Arg36, 57–59 (GLV), 85–88 (GFPR), and Gln92. Residues 122–159 (GRRVHVASGRTYHVKYNPPKTEGVDDESGEPLIQRDDD) form an LID region. ATP-binding positions include Arg123 and 132–133 (TY). The disordered stretch occupies residues 138–160 (NPPKTEGVDDESGEPLIQRDDDK). Residues Arg156 and Arg167 each contribute to the AMP site. Residue Gly207 coordinates ATP.

It belongs to the adenylate kinase family. As to quaternary structure, monomer.

It localises to the cytoplasm. The enzyme catalyses AMP + ATP = 2 ADP. Its pathway is purine metabolism; AMP biosynthesis via salvage pathway; AMP from ADP: step 1/1. Its function is as follows. Catalyzes the reversible transfer of the terminal phosphate group between ATP and AMP. Plays an important role in cellular energy homeostasis and in adenine nucleotide metabolism. The polypeptide is Adenylate kinase (Ralstonia pickettii (strain 12J)).